The chain runs to 260 residues: Hydroxyethylthiazole kinase 1 (260 aa).

A substrate-binding site is contributed by Met-39. Residues Arg-115 and Thr-160 each contribute to the ATP site. Gly-187 is a binding site for substrate.

It belongs to the Thz kinase family. Requires Mg(2+) as cofactor.

It catalyses the reaction 5-(2-hydroxyethyl)-4-methylthiazole + ATP = 4-methyl-5-(2-phosphooxyethyl)-thiazole + ADP + H(+). The protein operates within cofactor biosynthesis; thiamine diphosphate biosynthesis; 4-methyl-5-(2-phosphoethyl)-thiazole from 5-(2-hydroxyethyl)-4-methylthiazole: step 1/1. In terms of biological role, catalyzes the phosphorylation of the hydroxyl group of 4-methyl-5-beta-hydroxyethylthiazole (THZ). In Streptococcus pneumoniae (strain Hungary19A-6), this protein is Hydroxyethylthiazole kinase 1.